The sequence spans 82 residues: ATP synthase subunit c, chloroplastic (82 aa).

2 consecutive transmembrane segments (helical) span residues 4 to 24 (IISA…AIGP) and 57 to 77 (LAFM…LLFA).

The protein belongs to the ATPase C chain family. F-type ATPases have 2 components, F(1) - the catalytic core - and F(0) - the membrane proton channel. F(1) has five subunits: alpha(3), beta(3), gamma(1), delta(1), epsilon(1). F(0) has four main subunits: a(1), b(1), b'(1) and c(10-14). The alpha and beta chains form an alternating ring which encloses part of the gamma chain. F(1) is attached to F(0) by a central stalk formed by the gamma and epsilon chains, while a peripheral stalk is formed by the delta, b and b' chains.

Its subcellular location is the plastid. It is found in the chloroplast thylakoid membrane. Functionally, f(1)F(0) ATP synthase produces ATP from ADP in the presence of a proton or sodium gradient. F-type ATPases consist of two structural domains, F(1) containing the extramembraneous catalytic core and F(0) containing the membrane proton channel, linked together by a central stalk and a peripheral stalk. During catalysis, ATP synthesis in the catalytic domain of F(1) is coupled via a rotary mechanism of the central stalk subunits to proton translocation. Its function is as follows. Key component of the F(0) channel; it plays a direct role in translocation across the membrane. A homomeric c-ring of between 10-14 subunits forms the central stalk rotor element with the F(1) delta and epsilon subunits. In Heterosigma akashiwo (strain NIES-293 / 8280G21-1), this protein is ATP synthase subunit c, chloroplastic.